Consider the following 141-residue polypeptide: Galactose-6-phosphate isomerase subunit LacA (141 aa).

It belongs to the LacAB/RpiB family. Heteromultimeric protein consisting of LacA and LacB.

The enzyme catalyses aldehydo-D-galactose 6-phosphate = keto-D-tagatose 6-phosphate. It functions in the pathway carbohydrate metabolism; D-galactose 6-phosphate degradation; D-tagatose 6-phosphate from D-galactose 6-phosphate: step 1/1. This is Galactose-6-phosphate isomerase subunit LacA from Streptococcus pneumoniae (strain Taiwan19F-14).